A 516-amino-acid chain; its full sequence is HMG box-containing protein 1 (516 aa).

The tract at residues 150 to 182 (ARPPPVSSSSKSGPAFPHDHWKEETPVRHERAN) is disordered. A compositionally biased stretch (low complexity) spans 156 to 165 (SSSSKSGPAF). Over residues 166 to 182 (PHDHWKEETPVRHERAN) the composition is skewed to basic and acidic residues. Residues 203–345 (WCNSWPSTIW…PPGHPDAINF (143 aa)) enclose the AXH domain. Positions 436-504 (CKRPMNAFML…EQKRLNPDCW (69 aa)) form a DNA-binding region, HMG box.

As to quaternary structure, binds TCF4. Binds RB1. Binds the second PAH repeat of SIN3A. Post-translationally, ubiquitinated by the CTLH E3 ubiquitin-protein ligase complex, leading to subsequent proteasomal degradation.

It is found in the nucleus. Its function is as follows. Transcriptional repressor that binds to the promoter region of target genes. Plays a role in the regulation of the cell cycle and of the Wnt pathway. Binds preferentially to the sequence 5'-TTCATTCATTCA-3'. Binding to the histone H1.0 promoter is enhanced by interaction with RB1. Disrupts the interaction between DNA and TCF4. The chain is HMG box-containing protein 1 (Hbp1) from Mus musculus (Mouse).